We begin with the raw amino-acid sequence, 204 residues long: Urease accessory protein UreG (204 aa).

12 to 19 (GPVGSGKT) lines the GTP pocket.

Belongs to the SIMIBI class G3E GTPase family. UreG subfamily. Homodimer. UreD, UreF and UreG form a complex that acts as a GTP-hydrolysis-dependent molecular chaperone, activating the urease apoprotein by helping to assemble the nickel containing metallocenter of UreC. The UreE protein probably delivers the nickel.

It localises to the cytoplasm. Its function is as follows. Facilitates the functional incorporation of the urease nickel metallocenter. This process requires GTP hydrolysis, probably effectuated by UreG. This is Urease accessory protein UreG from Ectopseudomonas mendocina (strain ymp) (Pseudomonas mendocina).